A 192-amino-acid chain; its full sequence is Adenylate kinase (192 aa).

12–17 (GSGKTT) is a binding site for ATP. The interval 34 to 63 (STGDLLRAQVASGSELGKTIDSFISKGNLV) is NMP. Residues Thr35, Arg40, 61–63 (NLV), 88–91 (GYPR), and Gln95 contribute to the AMP site. Residues 130 to 136 (GRNRGAD) are LID. Arg131 contributes to the ATP binding site. AMP is bound by residues Arg133 and Arg145. An ATP-binding site is contributed by Arg173.

Belongs to the adenylate kinase family. As to quaternary structure, monomer.

Its subcellular location is the cytoplasm. It carries out the reaction AMP + ATP = 2 ADP. It participates in purine metabolism; AMP biosynthesis via salvage pathway; AMP from ADP: step 1/1. Its function is as follows. Catalyzes the reversible transfer of the terminal phosphate group between ATP and AMP. Plays an important role in cellular energy homeostasis and in adenine nucleotide metabolism. This chain is Adenylate kinase, found in Campylobacter jejuni subsp. doylei (strain ATCC BAA-1458 / RM4099 / 269.97).